Consider the following 392-residue polypeptide: Probable glycerol-3-phosphate dehydrogenase 2 (392 aa).

NAD(+)-binding positions include 42–47 (GSGNWG), Phe-130, Lys-153, and Ala-196. Residue Lys-153 coordinates substrate. The active-site Proton acceptor is Lys-248. The NAD(+) site is built by Arg-312 and Gln-341. 312–313 (RN) serves as a coordination point for substrate.

The protein belongs to the NAD-dependent glycerol-3-phosphate dehydrogenase family. In terms of assembly, homodimer.

Its subcellular location is the cytoplasm. It carries out the reaction sn-glycerol 3-phosphate + NAD(+) = dihydroxyacetone phosphate + NADH + H(+). In Caenorhabditis elegans, this protein is Probable glycerol-3-phosphate dehydrogenase 2 (gpdh-2).